Here is a 71-residue protein sequence, read N- to C-terminus: ATP synthase subunit c (71 aa).

Helical transmembrane passes span 5–25 and 47–67; these read GAAI…AIIV and FIGV…GFLI.

The protein belongs to the ATPase C chain family. As to quaternary structure, F-type ATPases have 2 components, F(1) - the catalytic core - and F(0) - the membrane proton channel. F(1) has five subunits: alpha(3), beta(3), gamma(1), delta(1), epsilon(1). F(0) has three main subunits: a(1), b(2) and c(10-14). The alpha and beta chains form an alternating ring which encloses part of the gamma chain. F(1) is attached to F(0) by a central stalk formed by the gamma and epsilon chains, while a peripheral stalk is formed by the delta and b chains.

The protein localises to the cell membrane. Functionally, f(1)F(0) ATP synthase produces ATP from ADP in the presence of a proton or sodium gradient. F-type ATPases consist of two structural domains, F(1) containing the extramembraneous catalytic core and F(0) containing the membrane proton channel, linked together by a central stalk and a peripheral stalk. During catalysis, ATP synthesis in the catalytic domain of F(1) is coupled via a rotary mechanism of the central stalk subunits to proton translocation. Key component of the F(0) channel; it plays a direct role in translocation across the membrane. A homomeric c-ring of between 10-14 subunits forms the central stalk rotor element with the F(1) delta and epsilon subunits. The chain is ATP synthase subunit c from Alkalihalobacillus alcalophilus (Bacillus alcalophilus).